We begin with the raw amino-acid sequence, 255 residues long: Electron transfer flavoprotein subunit beta (255 aa).

Residue alanine 2 is modified to N-acetylalanine. AMP-binding positions include alanine 9, 39–42, cysteine 66, and 123–134; these read NPFC and GKQAIDDDCNQT. The tract at residues 183–205 is recognition loop; the sequence is ADLRLNEPRYATLPNIMKAKKKK. Lysine 200 carries the N6,N6,N6-trimethyllysine; by ETFBKMT; alternate modification. N6-acetyllysine; alternate is present on lysine 200. Position 200 is an N6-methyllysine; alternate (lysine 200). Position 203 is an N6,N6,N6-trimethyllysine; by ETFBKMT (lysine 203). Lysine 210 bears the N6-acetyllysine; alternate mark. Position 210 is an N6-succinyllysine; alternate (lysine 210). Phosphoserine occurs at positions 223 and 226. An N6-acetyllysine modification is found at lysine 238. Residue lysine 248 is modified to N6-acetyllysine; alternate. The residue at position 248 (lysine 248) is an N6-succinyllysine; alternate.

Belongs to the ETF beta-subunit/FixA family. As to quaternary structure, heterodimer composed of ETFA and ETFB. Identified in a complex that contains ETFA, ETFB and ETFRF1. Interacts with ACADM. Post-translationally, methylated. Trimethylation at Lys-200 and Lys-203 may negatively regulate the activity in electron transfer from acyl-CoA dehydrogenases.

The protein resides in the mitochondrion matrix. Functionally, heterodimeric electron transfer flavoprotein that accepts electrons from several mitochondrial dehydrogenases, including acyl-CoA dehydrogenases, glutaryl-CoA and sarcosine dehydrogenase. It transfers the electrons to the main mitochondrial respiratory chain via ETF-ubiquinone oxidoreductase. Required for normal mitochondrial fatty acid oxidation and normal amino acid metabolism. ETFB binds an AMP molecule that probably has a purely structural role. This Sus scrofa (Pig) protein is Electron transfer flavoprotein subunit beta.